We begin with the raw amino-acid sequence, 443 residues long: Diels-Alderase poxQ (443 aa).

The signal sequence occupies residues 1–23; the sequence is MARIPLEFLSITLPVLLLAYCLA. Asn-78, Asn-97, and Asn-145 each carry an N-linked (GlcNAc...) asparagine glycan.

Belongs to the Diels-Alderase family.

The protein operates within secondary metabolite biosynthesis. Functionally, diels-Alderase; part of the gene cluster that mediates the biosynthesis of oxaleimides, cytotoxic compounds containing an unusual disubstituted succinimide moiety. The first step of the pathway is provided by the HR-PKS poxF that serves in a new mode of collaborative biosynthesis with the PKS-NRPS poxE, by providing the olefin containing amino acid substrate via the synthesis of an ACP-bound dec-4-enoate. The cytochrome P450 monooxygenase poxM-catalyzed oxidation at the alpha-position creates the enzyme-bound 2-hydroxydec-4-enoyl-ACP thioester, which may be prone to spontaneous hydrolysis to yield 2-hydroxydec-4-enoic acid due to increased electrophilicity of the carbonyl. 2-hydroxydec-4-enoic acid can then be further oxidized by poxM to yield the alpha-ketoacid 2-oxodec-4-enoicacid, which is reductively aminated by the aminotransferase poxL to yield (S,E)-2-aminodec-4-enoic acid. The Hybrid PKS-NRPS synthetase poxE then performs condensation between the octaketide product of its PKS modules and the amino group of (S,E)-2-aminodec-4-enoic acid which is activated and incorporated by the adenylation domain. The resulting aminoacyl product can be cyclized by the Diels-Alderase PoxQ and reductively released by the reductive (R) domain of poxE to yield an aldehyde intermediate. The released aldehyde is then substrate for a Knoevenagel condensation by the hydrolyase poxO followed by an oxidation at the 5-position of the pyrrolidone ring. The presence of the olefin from the amino acid building block allows for migration of the substituted allyl group to occur. This allylic transposition reaction takes place in a conjugate addition, semipinacol-like fashion to yield a succinimide intermediate. Iterative two-electron oxidations of the C7 methyl of the succinimide intermediate to the carboxylic acid can be catalyzed by one of two remaining cytochrome P450 monooxygenasess poxC or poxD to yield oxaleimide A. Subsequent oxidation yields the maleimide scaffold oxaleimide I. Both oxaleimide A and oxaleimide I can undergo oxidative modifications in the decalin ring to yield the series of products oxaleimides B to H. The sequence is that of Diels-Alderase poxQ from Penicillium oxalicum (strain 114-2 / CGMCC 5302) (Penicillium decumbens).